We begin with the raw amino-acid sequence, 505 residues long: Succinyl-CoA:acetate CoA-transferase (505 aa).

Residue G269–V273 coordinates CoA. The active-site 5-glutamyl coenzyme A thioester intermediate is E294. The CoA site is built by I364, N384, G388, and K408.

Belongs to the acetyl-CoA hydrolase/transferase family. In terms of assembly, homodimer.

The enzyme catalyses succinyl-CoA + acetate = succinate + acetyl-CoA. The protein operates within metabolic intermediate biosynthesis; acetyl-CoA biosynthesis. Its activity is regulated as follows. Subject to competitive inhibition by coenzyme A (CoA). Utilizes succinyl-CoA to convert toxic acetate to acetyl-CoA and succinate. Required for growth on acetic acid and for resistance to high levels of acetic acid. Also has low activity with acetoacetate as substrate. This Acetobacter aceti protein is Succinyl-CoA:acetate CoA-transferase.